A 348-amino-acid chain; its full sequence is Probable dual-specificity RNA methyltransferase RlmN (348 aa).

Residue E89 is the Proton acceptor of the active site. The Radical SAM core domain maps to H95–R328. The cysteines at positions 102 and 333 are disulfide-linked. Residues C109, C113, and C116 each contribute to the [4Fe-4S] cluster site. S-adenosyl-L-methionine is bound by residues G159–E160, S191, S214–H216, and N290. C333 acts as the S-methylcysteine intermediate in catalysis.

The protein belongs to the radical SAM superfamily. RlmN family. It depends on [4Fe-4S] cluster as a cofactor.

It localises to the cytoplasm. It catalyses the reaction adenosine(2503) in 23S rRNA + 2 reduced [2Fe-2S]-[ferredoxin] + 2 S-adenosyl-L-methionine = 2-methyladenosine(2503) in 23S rRNA + 5'-deoxyadenosine + L-methionine + 2 oxidized [2Fe-2S]-[ferredoxin] + S-adenosyl-L-homocysteine. The enzyme catalyses adenosine(37) in tRNA + 2 reduced [2Fe-2S]-[ferredoxin] + 2 S-adenosyl-L-methionine = 2-methyladenosine(37) in tRNA + 5'-deoxyadenosine + L-methionine + 2 oxidized [2Fe-2S]-[ferredoxin] + S-adenosyl-L-homocysteine. In terms of biological role, specifically methylates position 2 of adenine 2503 in 23S rRNA and position 2 of adenine 37 in tRNAs. This is Probable dual-specificity RNA methyltransferase RlmN from Dictyoglomus thermophilum (strain ATCC 35947 / DSM 3960 / H-6-12).